A 314-amino-acid chain; its full sequence is DNA-directed RNA polymerase subunit alpha (314 aa).

The tract at residues 1 to 227 (MLEIEKPKIE…DYLKLFVALT (227 aa)) is alpha N-terminal domain (alpha-NTD). The segment at 244–314 (QDKILEMTIE…LGLSLRKSED (71 aa)) is alpha C-terminal domain (alpha-CTD).

Belongs to the RNA polymerase alpha chain family. In terms of assembly, homodimer. The RNAP catalytic core consists of 2 alpha, 1 beta, 1 beta' and 1 omega subunit. When a sigma factor is associated with the core the holoenzyme is formed, which can initiate transcription.

The catalysed reaction is RNA(n) + a ribonucleoside 5'-triphosphate = RNA(n+1) + diphosphate. DNA-dependent RNA polymerase catalyzes the transcription of DNA into RNA using the four ribonucleoside triphosphates as substrates. This chain is DNA-directed RNA polymerase subunit alpha, found in Heliobacterium modesticaldum (strain ATCC 51547 / Ice1).